A 149-amino-acid polypeptide reads, in one-letter code: Large ribosomal subunit protein bL9 (149 aa).

This sequence belongs to the bacterial ribosomal protein bL9 family.

In terms of biological role, binds to the 23S rRNA. In Haemophilus influenzae (strain PittEE), this protein is Large ribosomal subunit protein bL9.